The primary structure comprises 334 residues: Holliday junction branch migration complex subunit RuvB (334 aa).

The tract at residues 4–184 is large ATPase domain (RuvB-L); it reads ADRIISASPK…FGIVQRLEFY (181 aa). Residues Ile-23, Arg-24, Gly-65, Lys-68, Thr-69, Thr-70, 131 to 133, Arg-174, Tyr-184, and Arg-221 each bind ATP; that span reads EDY. Residue Thr-69 participates in Mg(2+) binding. The small ATPAse domain (RuvB-S) stretch occupies residues 185–255; it reads SVDDLTSIVK…IAKQALAMLD (71 aa). Residues 258–334 form a head domain (RuvB-H) region; the sequence is SEGFDFMDIK…YAHLGIAKLD (77 aa). The DNA site is built by Arg-294, Arg-313, and Arg-318.

The protein belongs to the RuvB family. As to quaternary structure, homohexamer. Forms an RuvA(8)-RuvB(12)-Holliday junction (HJ) complex. HJ DNA is sandwiched between 2 RuvA tetramers; dsDNA enters through RuvA and exits via RuvB. An RuvB hexamer assembles on each DNA strand where it exits the tetramer. Each RuvB hexamer is contacted by two RuvA subunits (via domain III) on 2 adjacent RuvB subunits; this complex drives branch migration. In the full resolvosome a probable DNA-RuvA(4)-RuvB(12)-RuvC(2) complex forms which resolves the HJ.

The protein localises to the cytoplasm. The enzyme catalyses ATP + H2O = ADP + phosphate + H(+). In terms of biological role, the RuvA-RuvB-RuvC complex processes Holliday junction (HJ) DNA during genetic recombination and DNA repair, while the RuvA-RuvB complex plays an important role in the rescue of blocked DNA replication forks via replication fork reversal (RFR). RuvA specifically binds to HJ cruciform DNA, conferring on it an open structure. The RuvB hexamer acts as an ATP-dependent pump, pulling dsDNA into and through the RuvAB complex. RuvB forms 2 homohexamers on either side of HJ DNA bound by 1 or 2 RuvA tetramers; 4 subunits per hexamer contact DNA at a time. Coordinated motions by a converter formed by DNA-disengaged RuvB subunits stimulates ATP hydrolysis and nucleotide exchange. Immobilization of the converter enables RuvB to convert the ATP-contained energy into a lever motion, pulling 2 nucleotides of DNA out of the RuvA tetramer per ATP hydrolyzed, thus driving DNA branch migration. The RuvB motors rotate together with the DNA substrate, which together with the progressing nucleotide cycle form the mechanistic basis for DNA recombination by continuous HJ branch migration. Branch migration allows RuvC to scan DNA until it finds its consensus sequence, where it cleaves and resolves cruciform DNA. The sequence is that of Holliday junction branch migration complex subunit RuvB from Actinobacillus pleuropneumoniae serotype 5b (strain L20).